Reading from the N-terminus, the 137-residue chain is Methylglyoxal synthase (137 aa).

One can recognise an MGS-like domain in the interval 1–137 (MKIALIAHDK…DLLRGEEPNV (137 aa)). Residues histidine 8, lysine 12, 34–37 (TGTT), and 54–55 (SG) contribute to the substrate site. The active-site Proton donor/acceptor is the aspartate 60. Histidine 87 is a substrate binding site.

The protein belongs to the methylglyoxal synthase family.

The catalysed reaction is dihydroxyacetone phosphate = methylglyoxal + phosphate. In terms of biological role, catalyzes the formation of methylglyoxal from dihydroxyacetone phosphate. This is Methylglyoxal synthase from Bacillus subtilis (strain 168).